Reading from the N-terminus, the 343-residue chain is Ferrochelatase (343 aa).

Fe cation is bound by residues H191 and E270.

The protein belongs to the ferrochelatase family.

Its subcellular location is the cytoplasm. The catalysed reaction is heme b + 2 H(+) = protoporphyrin IX + Fe(2+). Its pathway is porphyrin-containing compound metabolism; protoheme biosynthesis; protoheme from protoporphyrin-IX: step 1/1. In terms of biological role, catalyzes the ferrous insertion into protoporphyrin IX. The chain is Ferrochelatase from Phenylobacterium zucineum (strain HLK1).